Consider the following 608-residue polypeptide: Nuclear protein localization protein 4 homolog (608 aa).

A2 bears the N-acetylalanine mark. The residue at position 179 (K179) is an N6-acetyllysine. Residues 226–363 form the MPN domain; it reads IMFENHTVAD…ICRLSPDGHF (138 aa). The segment at 580–608 adopts a RanBP2-type zinc-finger fold; that stretch reads TSAMWACQHCTFMNQPGTGHCEMCSLPRT.

The protein belongs to the NPL4 family. In terms of assembly, heterodimer with UFD1. The heterodimer binds ubiquitinated proteins. The heterodimer binds to VCP and inhibits Golgi membrane fusion. Interacts with ZFAND2B; probably through VCP.

The protein localises to the cytoplasm. It is found in the cytosol. The protein resides in the endoplasmic reticulum. Its subcellular location is the nucleus. It participates in protein degradation; proteasomal ubiquitin-dependent pathway. The ternary complex containing UFD1, VCP and NPLOC4 binds ubiquitinated proteins and is necessary for the export of misfolded proteins from the ER to the cytoplasm, where they are degraded by the proteasome. The NPLOC4-UFD1-VCP complex regulates spindle disassembly at the end of mitosis and is necessary for the formation of a closed nuclear envelope. Acts as a negative regulator of type I interferon production via the complex formed with VCP and UFD1, which binds to RIGI and recruits RNF125 to promote ubiquitination and degradation of RIGI. This Rattus norvegicus (Rat) protein is Nuclear protein localization protein 4 homolog (Nploc4).